Reading from the N-terminus, the 464-residue chain is Protein FAM90A20 (464 aa).

Disordered regions lie at residues 16-42 (RAQT…DPRL), 71-213 (ATLG…IPRP), 228-247 (PTHS…ASKT), 254-273 (VRTQ…CPSA), 309-389 (RLGP…HDGA), and 418-437 (EKPG…SEAP). Composition is skewed to basic and acidic residues over residues 74–83 (GKKEGKENLK) and 97–114 (NKDK…DPQR). The span at 180 to 197 (LASLSPLRKASLSSSSSL) shows a compositional bias: low complexity.

This sequence belongs to the FAM90 family.

This chain is Protein FAM90A20, found in Homo sapiens (Human).